We begin with the raw amino-acid sequence, 408 residues long: MTSKGPEEEHPSVTLFRQYLRIRTVQPKPDYGAAVAFFEERARQLGLGCQKVEVAPGYVVTVLTWPGTNPTLSSILLNSHTDVVPVFKEHWSHDPFEAFKDSEGYIYARGAQDMKCISIQYLEAVRRLKVEGHRFPRTIHMTFVPDEEVGGHQGMELFVQRPEFHALRAGFALDEGIANPTDAFTVFYSERSPWWVRVTSTGRPGHASRFMEDTAAEKLHKVVSSILAFREKEWQRLQSNPHLKEGSVTSVNLTKLEGGVAYNVIPATMSASFDFRVAPDVDFKAFEEQLQSWCQAAGEGVTLEFAQKWMHPQVTPTDDSNPWWAAFSRVCKDMKLTLEPEIMPAATDNRYIRAVGIPALGFSPMNRTPVLLHDHDERLHEAVFLRGVDIYTRLLPALASVPALPSES.

H80 lines the Zn(2+) pocket. Residue D82 is part of the active site. D113 contributes to the Zn(2+) binding site. E147 (proton acceptor) is an active-site residue. E148, E175, and H373 together coordinate Zn(2+).

This sequence belongs to the peptidase M20A family. In terms of assembly, homodimer. Interacts with SPHK1. It depends on Zn(2+) as a cofactor.

Its subcellular location is the cytoplasm. It carries out the reaction an N-acyl-L-amino acid + H2O = an L-alpha-amino acid + a carboxylate. The catalysed reaction is N-acetyl-L-methionine + H2O = L-methionine + acetate. The enzyme catalyses N-acetyl-L-glutamine + H2O = L-glutamine + acetate. Its function is as follows. Catalyzes the hydrolysis of N-acetylated amino acids to acetate and free amino acids. The sequence is that of Aminoacylase-1 (ACY1) from Pongo abelii (Sumatran orangutan).